The sequence spans 434 residues: Cyclic 2,3-diphosphoglycerate synthetase (434 aa).

It belongs to the cyclic 2,3-diphosphoglycerate synthetase family.

It localises to the cytoplasm. It catalyses the reaction (2R)-2,3-bisphosphoglycerate + ATP + H(+) = cyclic (2R)-2,3-bisphosphoglycerate + ADP + phosphate. In terms of biological role, catalyzes the formation of cyclic 2,3-diphosphoglycerate (cDPG) by formation of an intramolecular phosphoanhydride bond at the expense of ATP. The chain is Cyclic 2,3-diphosphoglycerate synthetase from Thermococcus sibiricus (strain DSM 12597 / MM 739).